Here is a 178-residue protein sequence, read N- to C-terminus: Nucleolar protein 16 (178 aa).

The segment at 1 to 31 (MPKAKGKTRRQKFGYSVNRKRLNRNARRKAA) is disordered. T8 is subject to Phosphothreonine. At S16 the chain carries Phosphoserine. Residue K74 forms a Glycyl lysine isopeptide (Lys-Gly) (interchain with G-Cter in SUMO2) linkage. K90 carries the post-translational modification N6-acetyllysine. A Phosphothreonine modification is found at T144. Glycyl lysine isopeptide (Lys-Gly) (interchain with G-Cter in SUMO2) cross-links involve residues F166, L167, K172, and R173.

It belongs to the NOP16 family.

It is found in the nucleus. The protein localises to the nucleolus. This Homo sapiens (Human) protein is Nucleolar protein 16 (NOP16).